We begin with the raw amino-acid sequence, 204 residues long: Holliday junction branch migration complex subunit RuvA (204 aa).

Residues 1 to 64 are domain I; it reads MIGRLQGILL…EDAHLLFGFA (64 aa). The interval 65–143 is domain II; it reads QKTDRTLFRE…GIKQSDFFVE (79 aa). The segment at 144–155 is flexible linker; that stretch reads STHIPLSPSIES. The domain III stretch occupies residues 156–204; the sequence is HSESSSDEAISALIALGYKPAEAEKMVKRVAKPELTSEQVIREALKAAL.

Belongs to the RuvA family. As to quaternary structure, homotetramer. Forms an RuvA(8)-RuvB(12)-Holliday junction (HJ) complex. HJ DNA is sandwiched between 2 RuvA tetramers; dsDNA enters through RuvA and exits via RuvB. An RuvB hexamer assembles on each DNA strand where it exits the tetramer. Each RuvB hexamer is contacted by two RuvA subunits (via domain III) on 2 adjacent RuvB subunits; this complex drives branch migration. In the full resolvosome a probable DNA-RuvA(4)-RuvB(12)-RuvC(2) complex forms which resolves the HJ.

The protein localises to the cytoplasm. Functionally, the RuvA-RuvB-RuvC complex processes Holliday junction (HJ) DNA during genetic recombination and DNA repair, while the RuvA-RuvB complex plays an important role in the rescue of blocked DNA replication forks via replication fork reversal (RFR). RuvA specifically binds to HJ cruciform DNA, conferring on it an open structure. The RuvB hexamer acts as an ATP-dependent pump, pulling dsDNA into and through the RuvAB complex. HJ branch migration allows RuvC to scan DNA until it finds its consensus sequence, where it cleaves and resolves the cruciform DNA. The sequence is that of Holliday junction branch migration complex subunit RuvA from Haemophilus influenzae (strain 86-028NP).